A 123-amino-acid polypeptide reads, in one-letter code: Large ribosomal subunit protein uL14 (123 aa).

This sequence belongs to the universal ribosomal protein uL14 family. As to quaternary structure, part of the 50S ribosomal subunit. Forms a cluster with proteins L3 and L19. In the 70S ribosome, L14 and L19 interact and together make contacts with the 16S rRNA in bridges B5 and B8.

In terms of biological role, binds to 23S rRNA. Forms part of two intersubunit bridges in the 70S ribosome. The protein is Large ribosomal subunit protein uL14 of Pectobacterium atrosepticum (strain SCRI 1043 / ATCC BAA-672) (Erwinia carotovora subsp. atroseptica).